Consider the following 351-residue polypeptide: Holliday junction branch migration complex subunit RuvB (351 aa).

The interval 4-185 (HDRELVSPEA…FGFVAHMDFY (182 aa)) is large ATPase domain (RuvB-L). ATP-binding positions include Leu24, Arg25, Gly66, Lys69, Thr70, Thr71, 132-134 (EDF), Arg175, Tyr185, and Arg222. Mg(2+) is bound at residue Thr70. A small ATPAse domain (RuvB-S) region spans residues 186-256 (SPEELELILH…CARAALSLYE (71 aa)). The interval 259–351 (DEGLDRLDRA…AALFDPDEEP (93 aa)) is head domain (RuvB-H). The DNA site is built by Arg314 and Arg319.

This sequence belongs to the RuvB family. In terms of assembly, homohexamer. Forms an RuvA(8)-RuvB(12)-Holliday junction (HJ) complex. HJ DNA is sandwiched between 2 RuvA tetramers; dsDNA enters through RuvA and exits via RuvB. An RuvB hexamer assembles on each DNA strand where it exits the tetramer. Each RuvB hexamer is contacted by two RuvA subunits (via domain III) on 2 adjacent RuvB subunits; this complex drives branch migration. In the full resolvosome a probable DNA-RuvA(4)-RuvB(12)-RuvC(2) complex forms which resolves the HJ.

The protein localises to the cytoplasm. The catalysed reaction is ATP + H2O = ADP + phosphate + H(+). Functionally, the RuvA-RuvB-RuvC complex processes Holliday junction (HJ) DNA during genetic recombination and DNA repair, while the RuvA-RuvB complex plays an important role in the rescue of blocked DNA replication forks via replication fork reversal (RFR). RuvA specifically binds to HJ cruciform DNA, conferring on it an open structure. The RuvB hexamer acts as an ATP-dependent pump, pulling dsDNA into and through the RuvAB complex. RuvB forms 2 homohexamers on either side of HJ DNA bound by 1 or 2 RuvA tetramers; 4 subunits per hexamer contact DNA at a time. Coordinated motions by a converter formed by DNA-disengaged RuvB subunits stimulates ATP hydrolysis and nucleotide exchange. Immobilization of the converter enables RuvB to convert the ATP-contained energy into a lever motion, pulling 2 nucleotides of DNA out of the RuvA tetramer per ATP hydrolyzed, thus driving DNA branch migration. The RuvB motors rotate together with the DNA substrate, which together with the progressing nucleotide cycle form the mechanistic basis for DNA recombination by continuous HJ branch migration. Branch migration allows RuvC to scan DNA until it finds its consensus sequence, where it cleaves and resolves cruciform DNA. The chain is Holliday junction branch migration complex subunit RuvB from Thermobifida fusca (strain YX).